The chain runs to 151 residues: Histone H2A.2.1 (151 aa).

An N-acetylmethionine modification is found at methionine 1. Disordered stretches follow at residues 1–22 (MDGSKAKKVAAKKFGGPRKKSV) and 129–151 (EKAEKAGAAPKSPKKTTKSPKKA). Short sequence motifs (SPKK motif) lie at residues 140–143 (SPKK) and 147–150 (SPKK). The segment covering 140–151 (SPKKTTKSPKKA) has biased composition (basic residues).

The protein belongs to the histone H2A family. In terms of assembly, the nucleosome is a histone octamer containing two molecules each of H2A, H2B, H3 and H4 assembled in one H3-H4 heterotetramer and two H2A-H2B heterodimers. The octamer wraps approximately 147 bp of DNA. In terms of processing, phosphorylated within its C-terminal part, probably at the SPKK motifs.

The protein resides in the nucleus. The protein localises to the chromosome. Its function is as follows. Core component of nucleosome. Nucleosomes wrap and compact DNA into chromatin, limiting DNA accessibility to the cellular machineries which require DNA as a template. Histones thereby play a central role in transcription regulation, DNA repair, DNA replication and chromosomal stability. DNA accessibility is regulated via a complex set of post-translational modifications of histones, also called histone code, and nucleosome remodeling. The polypeptide is Histone H2A.2.1 (Triticum aestivum (Wheat)).